Reading from the N-terminus, the 135-residue chain is Auxin-responsive protein SAUR66 (135 aa).

This sequence belongs to the ARG7 family.

Its subcellular location is the cell membrane. May promote auxin-stimulated organ elongation, such as hypocotyls, stamen filaments and petals. This chain is Auxin-responsive protein SAUR66, found in Arabidopsis thaliana (Mouse-ear cress).